The primary structure comprises 42 residues: Crotamine Ile-19 (42 aa).

Cystine bridges form between C4-C36, C11-C30, and C18-C37.

It belongs to the crotamine-myotoxin family. In terms of assembly, monomer. Expressed by the venom gland.

The protein resides in the secreted. Functionally, cationic peptide that possesses multiple functions. It acts as a cell-penetrating peptide (CPP), and as a potent voltage-gated potassium channel (Kv) inhibitor, it induces severe muscle necrosis by a non-enzymatic mechanism and exhibits antimicrobial activities. It also elicits a short-lasting hyperextension of the hind limb. It does not cause observable tissue damage (whereas the whole venom causes severe myonecrosis accompanied by edema and hemorrhage). The chain is Crotamine Ile-19 from Crotalus durissus ruruima (South American rattlesnake).